We begin with the raw amino-acid sequence, 230 residues long: Ribonuclease HII (230 aa).

The RNase H type-2 domain maps to Phe-28–Asp-217. Positions 34, 35, and 126 each coordinate a divalent metal cation. The disordered stretch occupies residues His-211 to Phe-230.

Belongs to the RNase HII family. The cofactor is Mn(2+). Mg(2+) serves as cofactor.

It localises to the cytoplasm. It catalyses the reaction Endonucleolytic cleavage to 5'-phosphomonoester.. In terms of biological role, endonuclease that specifically degrades the RNA of RNA-DNA hybrids. The sequence is that of Ribonuclease HII from Geobacter sp. (strain M21).